The chain runs to 66 residues: UPF0457 protein BA_2525/GBAA_2525/BAS2348 (66 aa).

The protein belongs to the UPF0457 family.

This Bacillus anthracis protein is UPF0457 protein BA_2525/GBAA_2525/BAS2348.